A 275-amino-acid chain; its full sequence is NH(3)-dependent NAD(+) synthetase (275 aa).

Residue 50 to 57 (GISGGVDS) coordinates ATP. Asp-56 contributes to the Mg(2+) binding site. A deamido-NAD(+)-binding site is contributed by Arg-147. Thr-167 contributes to the ATP binding site. Glu-172 is a Mg(2+) binding site. Deamido-NAD(+) contacts are provided by Lys-180 and Asp-187. Lys-196 and Thr-218 together coordinate ATP. 267-268 (HK) is a deamido-NAD(+) binding site.

It belongs to the NAD synthetase family. Homodimer.

It carries out the reaction deamido-NAD(+) + NH4(+) + ATP = AMP + diphosphate + NAD(+) + H(+). It participates in cofactor biosynthesis; NAD(+) biosynthesis; NAD(+) from deamido-NAD(+) (ammonia route): step 1/1. In terms of biological role, catalyzes the ATP-dependent amidation of deamido-NAD to form NAD. Uses ammonia as a nitrogen source. In Pseudomonas putida (strain GB-1), this protein is NH(3)-dependent NAD(+) synthetase.